We begin with the raw amino-acid sequence, 859 residues long: Probable helicase A859L (859 aa).

Positions 178-349 constitute a Helicase ATP-binding domain; it reads YQELRRSGRA…KNRELFGGVA (172 aa). ATP is bound at residue 191-198; that stretch reads MACRCGKT. The DEAH box signature appears at 298–301; the sequence is DECH. Residues 401 to 553 form the Helicase C-terminal domain; that stretch reads HLKTNITAPK…RFYEHLLNPS (153 aa).

This sequence belongs to the asfivirus helicase A859L family.

The polypeptide is Probable helicase A859L (African swine fever virus (isolate Tick/South Africa/Pretoriuskop Pr4/1996) (ASFV)).